Consider the following 346-residue polypeptide: Tripartite motif-containing protein 44 (346 aa).

The disordered stretch occupies residues 68–167; sequence TPPASGGDDA…ETEAESEFDP (100 aa). Residues 89-167 are compositionally biased toward acidic residues; that stretch reads EGEVESEVGE…ETEAESEFDP (79 aa). A B box-type zinc finger spans residues 176–217; it reads VAKRKCPDHGLDLSTYCQEDRQLICVLCPVIGAHRGHQLSTL. Residues Cys-181, His-184, Cys-203, and His-209 each coordinate Zn(2+). The stretch at 292 to 327 forms a coiled coil; the sequence is AHVTEILADIQSHMDRLMTQMAQAKEQLDTSNESAE. Residues 313–346 form a disordered region; it reads AQAKEQLDTSNESAEPKAEGDEEGPSGASEEEDT. Acidic residues predominate over residues 332–346; the sequence is GDEEGPSGASEEEDT. 2 positions are modified to phosphoserine: Ser-338 and Ser-341.

Interacts (via coiled coil) with TRIM17 (via coiled coil). Expressed mainly in brain with high level in cerebral hemispheres and cerebellum. Lower expression in kidney, lung and spleen. In brain is detected in the hippocampus, thalamic and pretectal nuclei, substantia nigra, the dorsal part of the medulla, the cerebellum, in the olfactory nucleus, other cortical areas apart from hippocampus and the striatum. Indeed expression is confined in neuronal somata namely in the CA3 region and dentate gyrus of the hippocampus, caudate-putamen, parabranchial nucleus, olfactory nucleus, cortex, deep cerebellar nuclei and thalamus. Also highly expressed in the spleen. thymus and testis.

Functionally, may play a role in the process of differentiation and maturation of neuronal cells. May regulate the activity of TRIM17. Is a negative regulator of PAX6 expression. This is Tripartite motif-containing protein 44 (Trim44) from Mus musculus (Mouse).